The primary structure comprises 292 residues: MDPSLLRDRELFKKRALSTPVVEKRAVPSESPSSSSSKKKKAKVEHGGSSGSKQNSDHNNGSFNLKALSGSSGYKFGVLAKIVNYMKTRHQRGDTHPLTLEEILDETQHLDIGLKQKQWLMTEALVNNPKIEVVDGKYAFKPKYNLKDKKALLRLLDNHDQRGLGGILLEDIEEGLPNSQKAVKALGDQILFVSRPDKKKILFFNDKSCQFSVDEEFQKLWRSVTVDSMDEEKIEEYLKRQGISSMQESGPKKVASIQRRKKPASQKKRRFKTHNEHLAGVLKDYSDITPGK.

The residue at position 1 (methionine 1) is an N-acetylmethionine. Residues 17 to 64 (LSTPVVEKRAVPSESPSSSSSKKKKAKVEHGGSSGSKQNSDHNNGSFN) form a disordered region. The segment covering 51–63 (GSKQNSDHNNGSF) has biased composition (polar residues). Serine 62 is subject to Phosphoserine. A DNA-binding region (TFIIE beta) is located at residues 67–147 (ALSGSSGYKF…YAFKPKYNLK (81 aa)). Residue lysine 75 is modified to N6-acetyllysine. A disordered region spans residues 245–277 (SMQESGPKKVASIQRRKKPASQKKRRFKTHNEH). Basic residues predominate over residues 258–272 (QRRKKPASQKKRRFK).

It belongs to the TFIIE beta subunit family. As to quaternary structure, tetramer of two alpha and two beta chains. Interacts with FACT subunit SUPT16H. Interacts with ATF7IP. Interacts with SND1. Part of TBP-based Pol II pre-initiation complex (PIC), in which Pol II core assembles with general transcription factors and other specific initiation factors including GTF2E1, GTF2E2, GTF2F1, GTF2F2, TCEA1, ERCC2, ERCC3, GTF2H2, GTF2H3, GTF2H4, GTF2H5, GTF2A1, GTF2A2, GTF2B and TBP; this large multi-subunit PIC complex mediates DNA unwinding and targets Pol II core to the transcription start site where the first phosphodiester bond forms.

The protein localises to the nucleus. Recruits TFIIH to the initiation complex and stimulates the RNA polymerase II C-terminal domain kinase and DNA-dependent ATPase activities of TFIIH. Both TFIIH and TFIIE are required for promoter clearance by RNA polymerase. The protein is General transcription factor IIE subunit 2 (Gtf2e2) of Mus musculus (Mouse).